Consider the following 490-residue polypeptide: MESISMMGSPKSLSETFLPNGINGIKDARKVTVGVIGSGDFAKSLTIRLIRCGYHVVIGSRNPKFASEFFPHVVDVTHHEDALTKTNIIFVAIHREHYTSLWDLRHLLVGKILIDVSNNMRINQYPESNAEYLASLFPDSLIVKGFNVVSAWALQLGPKDASRQVYICSNNIQARQQVIELARQLNFIPIDLGSLSSAREIENLPLRLFTLWRGPVVVAISLATFFFLYSFVRDVIHPYARNQQSDFYKIPIEIVNKTLPIVAITLLSLVYLAGLLAAAYQLYYGTKYRRFPPWLETWLQCRKQLGLLSFFFAMVHVAYSLCLPMRRSERYLFLNMAYQQVHANIENSWNEEEVWRIEMYISFGIMSLGLLSLLAVTSIPSVSNALNWREFSFIQSTLGYVALLISTFHVLIYGWKRAFEEEYYRFYTPPNFVLALVLPSIVILGKIILFLPCISRKLKRIKKGWEKSQFLEEGMGGTIPHVSPERVTVM.

NADP(+) is bound by residues 38 to 41, 60 to 61, 93 to 100, Asn118, and Ala151; these read SGDF, SR, and IHREHYTS. 2 residues coordinate FAD: Trp152 and Asp160. A helical membrane pass occupies residues 208–228; sequence LFTLWRGPVVVAISLATFFFL. Tyr229 is a Fe(3+) binding site. The chain crosses the membrane as a helical span at residues 259–279; the sequence is LPIVAITLLSLVYLAGLLAAA. Residues 259–407 enclose the Ferric oxidoreductase domain; sequence LPIVAITLLS…LGYVALLIST (149 aa). FAD is bound by residues Gln281 and Arg302. 4 helical membrane-spanning segments follow: residues 305–325, 359–379, 393–413, and 432–452; these read LGLLSFFFAMVHVAYSLCLPM, MYISFGIMSLGLLSLLAVTSI, FIQSTLGYVALLISTFHVLIY, and FVLALVLPSIVILGKIILFLP. His316 serves as a coordination point for heme b. A Fe(3+)-binding site is contributed by Tyr319. FAD-binding residues include Ser378 and Gln395. Position 409 (His409) interacts with heme b. Ser483 is modified (phosphoserine).

Belongs to the STEAP family. Requires FAD as cofactor. Heme b is required as a cofactor. In terms of tissue distribution, expressed at high levels in prostate and at significantly lower levels in heart, brain, kidney, pancreas, and ovary.

It is found in the endosome membrane. The protein resides in the cell membrane. It carries out the reaction 2 Fe(2+) + NADP(+) + H(+) = 2 Fe(3+) + NADPH. It catalyses the reaction 2 Cu(+) + NADP(+) + H(+) = 2 Cu(2+) + NADPH. Integral membrane protein that functions as a NADPH-dependent ferric-chelate reductase, using NADPH from one side of the membrane to reduce a Fe(3+) chelate that is bound on the other side of the membrane. Mediates sequential transmembrane electron transfer from NADPH to FAD and onto heme, and finally to the Fe(3+) chelate. Can also reduce Cu(2+) to Cu(1+). The sequence is that of Metalloreductase STEAP2 (STEAP2) from Homo sapiens (Human).